Here is a 118-residue protein sequence, read N- to C-terminus: NADH dehydrogenase [ubiquinone] iron-sulfur protein 5-A (118 aa).

A CHCH domain is found at 46–87; that stretch reads KGRCYDFWMDFSECMSHCREPKDCTLLREDYLECLHHSKEFQ. Short sequence motifs (cx9C motif) lie at residues 49–59 and 69–79; these read CYDFWMDFSEC and CTLLREDYLEC. 2 disulfides stabilise this stretch: C49–C79 and C59–C69. Residues 98–118 are disordered; that stretch reads RKLRAASRKGEEAGDGTHNHH.

It belongs to the complex I NDUFS5 subunit family. As to quaternary structure, complex I is composed of at least 49 different subunits. This is a component of the iron-sulfur (IP) fragment of the enzyme.

Its subcellular location is the mitochondrion. It localises to the mitochondrion inner membrane. The protein localises to the mitochondrion intermembrane space. Accessory subunit of the mitochondrial membrane respiratory chain NADH dehydrogenase (Complex I), that is believed not to be involved in catalysis. Complex I functions in the transfer of electrons from NADH to the respiratory chain. The immediate electron acceptor for the enzyme is believed to be ubiquinone. The protein is NADH dehydrogenase [ubiquinone] iron-sulfur protein 5-A of Arabidopsis thaliana (Mouse-ear cress).